A 567-amino-acid polypeptide reads, in one-letter code: MRPDSPTMAAPAESLRRRKTGYSDPEPESPPAPGRGPAGSPAHLHTGTFWLTRIVLLKALAFVYFVAFLVAFHQNKQLIGDRGLLPCRVFLKNFQQYFQDRTSWEVFSYMPTILWLMDWSDMNSNLDLLALLGLGISSFVLITGCANMLLMAALWGLYMSLVNVGHVWYSFGWESQLLETGFLGIFLCPLWTLSRLPQHTPTSRIVLWGFRWLIFRIMLGAGLIKIRGDRCWRDLTCMDFHYETQPMPNPVAYYLHHSPWWFHRFETLSNHFIELLVPFFLFLGRRACIIHGVLQILFQAVLIVSGNLSFLNWLTMVPSLACFDDATLGFLFPSGPGSLKDRVLQMQRDIRGARPEPRFGSVVRRAANVSLGVLLAWLSVPVVLNLLSSRQVMNTHFNSLHIVNTYGAFGSITKERAEVILQGTASSNASAPDAMWEDYEFKCKPGDPSRRPCLISPYHYRLDWLMWFAAFQTYEHNDWIIHLAGKLLASDAEALSLLAHNPFAGRPPPRWVRGEHYRYKFSRPGGRHAAEGKWWVRKRIGAYFPPLSLEELRPYFRDRGWPLPGPL.

A disordered region spans residues M1–G39. Residues M1–F49 lie on the Cytoplasmic side of the membrane. A helical transmembrane segment spans residues W50–F72. The Lumenal portion of the chain corresponds to H73–D127. A helical transmembrane segment spans residues L128 to M151. Over A152–L207 the chain is Cytoplasmic. The chain crosses the membrane as a helical span at residues W208–A221. Residues G222–G292 are Lumenal-facing. The chain crosses the membrane as a helical span at residues V293–A321. At C322–A367 the chain is on the cytoplasmic side. A helical membrane pass occupies residues N368 to S388. Over S389–L567 the chain is Lumenal.

The protein belongs to the lipase maturation factor family. Interacts with LPL and SEL1L.

Its subcellular location is the endoplasmic reticulum membrane. In terms of biological role, involved in the maturation of specific proteins in the endoplasmic reticulum. Required for maturation and transport of active lipoprotein lipase (LPL) through the secretory pathway. Each LMF1 molecule chaperones 50 or more molecules of LPL. In Homo sapiens (Human), this protein is Lipase maturation factor 1 (LMF1).